The primary structure comprises 569 residues: Sulfite reductase [NADPH] hemoprotein beta-component (569 aa).

Residues Cys433, Cys439, Cys478, and Cys482 each contribute to the [4Fe-4S] cluster site. Residue Cys482 coordinates siroheme.

Belongs to the nitrite and sulfite reductase 4Fe-4S domain family. In terms of assembly, alpha(8)-beta(8). The alpha component is a flavoprotein, the beta component is a hemoprotein. The cofactor is siroheme. It depends on [4Fe-4S] cluster as a cofactor.

It carries out the reaction hydrogen sulfide + 3 NADP(+) + 3 H2O = sulfite + 3 NADPH + 4 H(+). Its pathway is sulfur metabolism; hydrogen sulfide biosynthesis; hydrogen sulfide from sulfite (NADPH route): step 1/1. In terms of biological role, component of the sulfite reductase complex that catalyzes the 6-electron reduction of sulfite to sulfide. This is one of several activities required for the biosynthesis of L-cysteine from sulfate. This Buchnera aphidicola subsp. Acyrthosiphon pisum (strain 5A) protein is Sulfite reductase [NADPH] hemoprotein beta-component.